A 932-amino-acid polypeptide reads, in one-letter code: Protocadherin gamma-A2 (932 aa).

The N-terminal stretch at 1-28 is a signal peptide; that stretch reads MAALQKLPHCRKLVLLCFLLATLWEARA. Cadherin domains are found at residues 29–133, 134–242, 243–347, 348–452, 453–562, and 570–682; these read GQIR…APRF, GVEE…APVF, TQPE…APEF, YMTS…APAF, SRTS…APEI, and DGST…EPSA. The Extracellular segment spans residues 29 to 692; sequence GQIRYSVREE…IPNDSDLTLY (664 aa). N-linked (GlcNAc...) asparagine glycans are attached at residues asparagine 419 and asparagine 545. A glycan (N-linked (GlcNAc...) asparagine) is linked at asparagine 685. The chain crosses the membrane as a helical span at residues 693 to 713; it reads LVVAVAAVSCVFLAFVIVLLA. Residues 714 to 932 lie on the Cytoplasmic side of the membrane; that stretch reads HRLRRWHKSR…KKKSGKKEKK (219 aa). Disordered stretches follow at residues 798-841 and 902-932; these read LEEE…WPNN and ATLT…KEKK. Residues 806-841 are compositionally biased toward polar residues; that stretch reads FSQQAPPNTDWRFSQAQRPGTSGSQNGDDTGTWPNN. Positions 922 to 932 are enriched in basic residues; sequence NKKKSGKKEKK.

The protein resides in the cell membrane. Functionally, potential calcium-dependent cell-adhesion protein. May be involved in the establishment and maintenance of specific neuronal connections in the brain. The polypeptide is Protocadherin gamma-A2 (PCDHGA2) (Homo sapiens (Human)).